A 213-amino-acid polypeptide reads, in one-letter code: Orotate phosphoribosyltransferase (213 aa).

Residue lysine 26 coordinates 5-phospho-alpha-D-ribose 1-diphosphate. Residue 34–35 coordinates orotate; sequence FF. 5-phospho-alpha-D-ribose 1-diphosphate is bound by residues 72–73, arginine 98, lysine 99, lysine 102, and 123–131; these read YK and DDVISAGTS. Residues serine 127 and arginine 155 each contribute to the orotate site.

The protein belongs to the purine/pyrimidine phosphoribosyltransferase family. PyrE subfamily. Homodimer. It depends on Mg(2+) as a cofactor.

It catalyses the reaction orotidine 5'-phosphate + diphosphate = orotate + 5-phospho-alpha-D-ribose 1-diphosphate. Its pathway is pyrimidine metabolism; UMP biosynthesis via de novo pathway; UMP from orotate: step 1/2. Catalyzes the transfer of a ribosyl phosphate group from 5-phosphoribose 1-diphosphate to orotate, leading to the formation of orotidine monophosphate (OMP). The polypeptide is Orotate phosphoribosyltransferase (Neisseria gonorrhoeae (strain ATCC 700825 / FA 1090)).